The sequence spans 153 residues: Small ribosomal subunit protein bS6 (153 aa).

The interval 94–153 (EAHEEGPSAMMQKRDRDDRPRRDGDRPDRGPREDRGPRPPREGGFGDREDRPRRPREDRA) is disordered.

Belongs to the bacterial ribosomal protein bS6 family.

Its function is as follows. Binds together with bS18 to 16S ribosomal RNA. This chain is Small ribosomal subunit protein bS6, found in Agrobacterium fabrum (strain C58 / ATCC 33970) (Agrobacterium tumefaciens (strain C58)).